Here is a 797-residue protein sequence, read N- to C-terminus: Sodium/hydrogen exchanger 4 (797 aa).

Residues 1–13 (MGPAMFMAFRLWN) are Cytoplasmic-facing. Residues 14-28 (WLLLLAVLTRSEATS) constitute an intramembrane region (name=A/M1). Over 29–69 (YVNESSNPTAQQAPDARFAASSSDPDEGISVFELDYDYVQI) the chain is Cytoplasmic. Positions 32–52 (ESSNPTAQQAPDARFAASSSD) are disordered. Residues 70-90 (PYEVTLWILLASLAKIGFHLY) constitute an intramembrane region (name=B/M2). Over 91 to 94 (HRLP) the chain is Cytoplasmic. A helical transmembrane segment spans residues 95–114 (HLMPESCLLIIVGALVGGII). At 115–127 (FGTHHKSPPVMDS) the chain is on the extracellular side. A helical membrane pass occupies residues 128 to 148 (SIYFLYLLPPIVLESGYFMPT). At 149-154 (RPFFEN) the chain is on the cytoplasmic side. The helical transmembrane segment at 155–175 (IGSILWWAGLGALINAFGIGL) threads the bilayer. The Extracellular segment spans residues 176–194 (SLYFICQIKAFGLGDINLL). The helical transmembrane segment at 195–215 (HNLLFGSLISAVDPVAVLAVF) threads the bilayer. Residues 216 to 226 (EEARVNEQLYM) are Cytoplasmic-facing. Residues 227–247 (MIFGEALLNDGISVVLYNILI) form a helical membrane-spanning segment. The Extracellular portion of the chain corresponds to 248-270 (AFTKMHKFEDIEAVDILAGCARF). The chain crosses the membrane as a helical span at residues 271 to 291 (VIVGCGGVFFGIIFGFISAFI). At 292–304 (TRFTQNISAIEPL) the chain is on the cytoplasmic side. The chain crosses the membrane as a helical span at residues 305–325 (IVFMFSYLSYLAAETLYLSGI). Topologically, residues 326-352 (LAITACAVTMKKYVEENVSQTSYTTIK) are extracellular. An N-linked (GlcNAc...) asparagine glycan is attached at asparagine 342. The helical transmembrane segment at 353–373 (YFMKMLSSVSETLIFIFMGVS) threads the bilayer. Topologically, residues 374-384 (TIGKNHEWNWA) are cytoplasmic. A helical transmembrane segment spans residues 385-405 (FICFTLLFCQIWRAISVFTLF). Topologically, residues 406–420 (YVSNQFRTFPFSIKD) are extracellular. The segment at residues 421–441 (QFIIFYSGVRGAGSFSLAFLL) is an intramembrane region (name=L). The Extracellular segment spans residues 442–450 (PLSLFPRKK). A helical membrane pass occupies residues 451–471 (LFVTATLVVTYFTVFFQGITI). Over 472-797 (GPLVRYLDVR…KSHSPLLHRK (326 aa)) the chain is Cytoplasmic. Residues 759–769 (YDSGEQTEEET) show a composition bias toward acidic residues. The interval 759-797 (YDSGEQTEEETSAILSRWTAEHRHSTEHHKSHSPLLHRK) is disordered. Residues 783 to 797 (STEHHKSHSPLLHRK) show a composition bias toward basic residues.

It belongs to the monovalent cation:proton antiporter 1 (CPA1) transporter (TC 2.A.36) family. In terms of assembly, homodimer; each protomer has one site for sodium and one site for proton binding. Interacts with CHP1 and CHP2. In terms of processing, may be phosphorylated. As to expression, expressed in kidney. Expressed in uterus and endometrial epithelial cells. Expressed in the inner segments of inner medullary collecting ducts (IMCD) in kidney. Expressed in AGTR1-positive neurons in organum vasculosum of the lamina terminalis (at protein level).

It localises to the basolateral cell membrane. It is found in the apical cell membrane. The protein resides in the zymogen granule membrane. It carries out the reaction Na(+)(in) + H(+)(out) = Na(+)(out) + H(+)(in). The catalysed reaction is Na(+)(out) + NH4(+)(in) = Na(+)(in) + NH4(+)(out). Its activity is regulated as follows. Up-regulated in response to high extracellular sodium concentration. Functionally, electroneutral antiporter that exchanges sodium for protons or ammonium ions at the basolateral membrane of epithelia to regulate cell volume and intracellular pH upon hypertonic conditions. As part of transcellular ammonia transport in renal tubules, mediates basolateral ammonium extrusion in the medullary thick ascending limb, regulating the corticopapillary ammonium gradient and overall renal acid excretion. Mediates sodium:proton exchange in gastric parietal cells secondary to cAMP-dependent acid secretion and hyperosmolarity. Possibly coupled to chloride:bicarbonate antiporter, enables loading of parietal cells with sodium and chloride ions to maintain cell volume and normal gastric acid secretion. Functions as a sodium sensor in neurons of organum vasculosum of the lamina terminalis where it regulates water intake in response to increased sodium concentration in body fluids. In Mus musculus (Mouse), this protein is Sodium/hydrogen exchanger 4 (Slc9a4).